Reading from the N-terminus, the 317-residue chain is Probable cell division protein WhiA (317 aa).

The segment at residues 267-300 (SLKELGEMLHPPVGKSGVNHRLRRLELIARQVRG) is a DNA-binding region (H-T-H motif).

This sequence belongs to the WhiA family.

In terms of biological role, involved in cell division and chromosome segregation. The sequence is that of Probable cell division protein WhiA from Moorella thermoacetica (strain ATCC 39073 / JCM 9320).